The following is a 338-amino-acid chain: Arginine N-succinyltransferase subunit alpha (338 aa).

Belongs to the succinylarginine dihydrolase family. Heterotetramer of two alpha and two beta subunits.

The enzyme catalyses succinyl-CoA + L-arginine = N(2)-succinyl-L-arginine + CoA + H(+). Its pathway is amino-acid degradation; L-arginine degradation via AST pathway; L-glutamate and succinate from L-arginine: step 1/5. Functionally, catalyzes the transfer of succinyl-CoA to arginine to produce N(2)-succinylarginine. Also acts on L-ornithine. The protein is Arginine N-succinyltransferase subunit alpha (astA) of Pseudomonas aeruginosa (strain ATCC 15692 / DSM 22644 / CIP 104116 / JCM 14847 / LMG 12228 / 1C / PRS 101 / PAO1).